The following is a 115-amino-acid chain: Beta-2-microglobulin (115 aa).

A signal peptide spans 1-16 (MKIALVLLSLLALTLA). Residues 22–113 (PPVVKVYTAE…GNPSKKYRLD (92 aa)) enclose the Ig-like C1-type domain.

It belongs to the beta-2-microglobulin family. Heterodimer of an alpha chain and a beta chain. Beta-2-microglobulin is the beta-chain of major histocompatibility complex class I molecules.

It localises to the secreted. Functionally, component of the class I major histocompatibility complex (MHC). Involved in the presentation of peptide antigens to the immune system. This Xenopus laevis (African clawed frog) protein is Beta-2-microglobulin (b2m).